The primary structure comprises 472 residues: 3-isopropylmalate dehydratase large subunit (472 aa).

Positions 289–312 (TWGTNPAQGTGVSQVVPSPDDAKD) are disordered. Polar residues predominate over residues 290 to 304 (WGTNPAQGTGVSQVV). [4Fe-4S] cluster-binding residues include cysteine 347, cysteine 407, and cysteine 410.

It belongs to the aconitase/IPM isomerase family. LeuC type 1 subfamily. Heterodimer of LeuC and LeuD. The cofactor is [4Fe-4S] cluster.

It carries out the reaction (2R,3S)-3-isopropylmalate = (2S)-2-isopropylmalate. The protein operates within amino-acid biosynthesis; L-leucine biosynthesis; L-leucine from 3-methyl-2-oxobutanoate: step 2/4. Functionally, catalyzes the isomerization between 2-isopropylmalate and 3-isopropylmalate, via the formation of 2-isopropylmaleate. This is 3-isopropylmalate dehydratase large subunit from Halalkalibacterium halodurans (strain ATCC BAA-125 / DSM 18197 / FERM 7344 / JCM 9153 / C-125) (Bacillus halodurans).